The following is a 523-amino-acid chain: DNA-directed primase/polymerase protein (523 aa).

Residues Arg-78, 117–119 (DLE), and 168–172 (KFSHH) each bind substrate. Mn(2+) contacts are provided by Asp-117 and Glu-119. Positions 203 to 230 (LKKSNPEAPGENRDDVEGTQAKRRKTEE) are disordered. Residues 258–261 (RNFR) and Lys-267 contribute to the substrate site. Cys-390, His-397, Cys-417, and Cys-422 together coordinate Zn(2+). Residues 390-423 (CHNVKRFHKSNNIIIVVDLKEEVWYQKCHDPECR) carry the Zinc knuckle motif motif. Residues 467-477 (APAESTSTTPS) show a composition bias toward low complexity. The interval 467-523 (APAESTSTTPSEDTEGWGDWPDDPAYLRALQEVEEEEEDEDEEVPDELLLQAVNECE) is disordered. Acidic residues-rich tracts occupy residues 478-488 (EDTEGWGDWPD) and 498-512 (EVEE…EVPD).

The protein belongs to the eukaryotic-type primase small subunit family. It depends on Mn(2+) as a cofactor.

The protein resides in the nucleus. The protein localises to the mitochondrion matrix. Its subcellular location is the chromosome. The enzyme catalyses ssDNA + n NTP = ssDNA/pppN(pN)n-1 hybrid + (n-1) diphosphate.. It carries out the reaction DNA(n) + a 2'-deoxyribonucleoside 5'-triphosphate = DNA(n+1) + diphosphate. Its function is as follows. DNA primase and DNA polymerase required to tolerate replication-stalling lesions by bypassing them. Required to facilitate mitochondrial and nuclear replication fork progression by initiating de novo DNA synthesis using dNTPs and acting as an error-prone DNA polymerase able to bypass certain DNA lesions. Shows a high capacity to tolerate DNA damage lesions such as 8oxoG and abasic sites in DNA. Provides different translesion synthesis alternatives when DNA replication is stalled: able to synthesize DNA primers downstream of lesions, such as UV lesions, R-loops and G-quadruplexes, to allow DNA replication to continue. Can also realign primers ahead of 'unreadable lesions' such as abasic sites and 6-4 photoproduct (6-4 pyrimidine-pyrimidinone), thereby skipping the lesion. Repriming avoids fork degradation while leading to accumulation of internal ssDNA gaps behind the forks. Also able to incorporate nucleotides opposite DNA lesions such as 8oxoG, like a regular translesion synthesis DNA polymerase. Also required for reinitiating stalled forks after ultraviolet (UV) damage during nuclear DNA replication. Required for mitochondrial DNA (mtDNA) synthesis and replication, by reinitiating synthesis after UV damage or in the presence of chain-terminating nucleotides. In addition to its role in DNA damage response, also required to maintain efficient nuclear and mitochondrial DNA replication in unperturbed cells. This chain is DNA-directed primase/polymerase protein, found in Danio rerio (Zebrafish).